The primary structure comprises 41 residues: Histone H3.2 (41 aa).

The disordered stretch occupies residues 1–41 (MARTKQTARKSTGAKAPRKQLASKAARKSAPATGGIKKPHR).

The protein belongs to the histone H3 family. The nucleosome is a histone octamer containing two molecules each of H2A, H2B, H3 and H4 assembled in one H3-H4 heterotetramer and two H2A-H2B heterodimers. The octamer wraps approximately 147 bp of DNA.

The protein localises to the nucleus. Its subcellular location is the chromosome. In terms of biological role, core component of nucleosome. Nucleosomes wrap and compact DNA into chromatin, limiting DNA accessibility to the cellular machineries which require DNA as a template. Histones thereby play a central role in transcription regulation, DNA repair, DNA replication and chromosomal stability. DNA accessibility is regulated via a complex set of post-translational modifications of histones, also called histone code, and nucleosome remodeling. This chain is Histone H3.2, found in Tetrahymena australis.